The primary structure comprises 389 residues: Chalcone synthase (389 aa).

The active site involves cysteine 164.

The protein belongs to the thiolase-like superfamily. Chalcone/stilbene synthases family.

It catalyses the reaction (E)-4-coumaroyl-CoA + 3 malonyl-CoA + 3 H(+) = 2',4,4',6'-tetrahydroxychalcone + 3 CO2 + 4 CoA. The protein operates within secondary metabolite biosynthesis; flavonoid biosynthesis. The primary product of this enzyme is 4,2',4',6'-tetrahydroxychalcone (also termed naringenin-chalcone or chalcone) which can under specific conditions spontaneously isomerize into naringenin. The chain is Chalcone synthase (CHS) from Catharanthus roseus (Madagascar periwinkle).